A 445-amino-acid polypeptide reads, in one-letter code: Putative MgpC-like protein MPN_464 (445 aa).

The interval 23 to 44 (STTVAVQKSDSSGSQGQGTTDN) is disordered. The span at 31–43 (SDSSGSQGQGTTD) shows a compositional bias: low complexity.

Belongs to the MgpC family.

This is Putative MgpC-like protein MPN_464 from Mycoplasma pneumoniae (strain ATCC 29342 / M129 / Subtype 1) (Mycoplasmoides pneumoniae).